Reading from the N-terminus, the 324-residue chain is tRNA N6-adenosine threonylcarbamoyltransferase (324 aa).

Residues H107, H111, and Y128 each contribute to the Fe cation site. Residues 128-132, D160, G173, E177, and N256 contribute to the substrate site; that span reads YVSGG. Residue D284 participates in Fe cation binding.

This sequence belongs to the KAE1 / TsaD family. Monomer. Component of the KEOPS complex that consists of Kae1, Bud32, Cgi121 and Pcc1; the whole complex dimerizes. Fe(2+) serves as cofactor.

The protein localises to the cytoplasm. It carries out the reaction L-threonylcarbamoyladenylate + adenosine(37) in tRNA = N(6)-L-threonylcarbamoyladenosine(37) in tRNA + AMP + H(+). In terms of biological role, required for the formation of a threonylcarbamoyl group on adenosine at position 37 (t(6)A37) in tRNAs that read codons beginning with adenine. Is a component of the KEOPS complex that is probably involved in the transfer of the threonylcarbamoyl moiety of threonylcarbamoyl-AMP (TC-AMP) to the N6 group of A37. Kae1 likely plays a direct catalytic role in this reaction, but requires other protein(s) of the complex to fulfill this activity. This is tRNA N6-adenosine threonylcarbamoyltransferase from Methanothrix thermoacetophila (strain DSM 6194 / JCM 14653 / NBRC 101360 / PT) (Methanosaeta thermophila).